Here is a 673-residue protein sequence, read N- to C-terminus: Putative K(+)-stimulated pyrophosphate-energized sodium pump (673 aa).

5 helical membrane-spanning segments follow: residues 3–23 (SFIV…FMLS), 62–82 (IVIV…ACFI), 84–104 (GAIF…KANV), 127–147 (VMGM…YYIF), and 154–174 (VTGF…GGGI). Lys177 serves as a coordination point for substrate. Mg(2+) contacts are provided by Asp180, Asp184, Asn207, and Asp210. The next 6 helical transmembrane spans lie at 222–242 (LFES…VVYA), 247–267 (VMFP…GILF), 279–299 (ALNT…AILS), 302–322 (IFGN…GMII), 364–384 (LWPI…MGGG), and 387–407 (AMVG…TTGL). Position 419 (Asp419) interacts with Mg(2+). 4 consecutive transmembrane segments (helical) span residues 449-469 (AAIG…SLFA), 486-506 (VTLV…ALTM), 553-573 (EMIL…LLLG), and 576-596 (ALGG…ILMS). Ca(2+)-binding residues include Asp603, Asp629, and Asp633. Lys636 is a substrate binding site. Residues 652-672 (IVSLVFAPVVLQYGGILLNLI) form a helical membrane-spanning segment.

This sequence belongs to the H(+)-translocating pyrophosphatase (TC 3.A.10) family. K(+)-stimulated subfamily. Homodimer. It depends on Mg(2+) as a cofactor.

It localises to the cell membrane. The enzyme catalyses Na(+)(in) + diphosphate + H2O = Na(+)(out) + 2 phosphate + H(+). Its activity is regulated as follows. Requires K(+) for maximal activity. Sodium pump that utilizes the energy of pyrophosphate hydrolysis as the driving force for Na(+) movement across the membrane. The sequence is that of Putative K(+)-stimulated pyrophosphate-energized sodium pump from Clostridium tetani (strain Massachusetts / E88).